The chain runs to 249 residues: Type III pantothenate kinase (249 aa).

8 to 15 serves as a coordination point for ATP; the sequence is DAGNSRLK. Substrate contacts are provided by residues Tyr95 and 102 to 105; that span reads GVDR. The active-site Proton acceptor is the Asp104. Asp125 is a binding site for K(+). Thr128 is an ATP binding site. Thr179 contacts substrate.

The protein belongs to the type III pantothenate kinase family. Homodimer. The cofactor is NH4(+). Requires K(+) as cofactor.

It localises to the cytoplasm. The catalysed reaction is (R)-pantothenate + ATP = (R)-4'-phosphopantothenate + ADP + H(+). It functions in the pathway cofactor biosynthesis; coenzyme A biosynthesis; CoA from (R)-pantothenate: step 1/5. In terms of biological role, catalyzes the phosphorylation of pantothenate (Pan), the first step in CoA biosynthesis. The chain is Type III pantothenate kinase from Alkalilimnicola ehrlichii (strain ATCC BAA-1101 / DSM 17681 / MLHE-1).